The chain runs to 219 residues: Phosphatidylserine decarboxylase proenzyme (219 aa).

Ser-188 serves as the catalytic Schiff-base intermediate with substrate; via pyruvic acid. At Ser-188 the chain carries Pyruvic acid (Ser); by autocatalysis.

It belongs to the phosphatidylserine decarboxylase family. PSD-A subfamily. In terms of assembly, heterodimer of a large membrane-associated beta subunit and a small pyruvoyl-containing alpha subunit. The cofactor is pyruvate. Is synthesized initially as an inactive proenzyme. Formation of the active enzyme involves a self-maturation process in which the active site pyruvoyl group is generated from an internal serine residue via an autocatalytic post-translational modification. Two non-identical subunits are generated from the proenzyme in this reaction, and the pyruvate is formed at the N-terminus of the alpha chain, which is derived from the carboxyl end of the proenzyme. The post-translation cleavage follows an unusual pathway, termed non-hydrolytic serinolysis, in which the side chain hydroxyl group of the serine supplies its oxygen atom to form the C-terminus of the beta chain, while the remainder of the serine residue undergoes an oxidative deamination to produce ammonia and the pyruvoyl prosthetic group on the alpha chain.

The protein resides in the cell membrane. The catalysed reaction is a 1,2-diacyl-sn-glycero-3-phospho-L-serine + H(+) = a 1,2-diacyl-sn-glycero-3-phosphoethanolamine + CO2. It participates in phospholipid metabolism; phosphatidylethanolamine biosynthesis; phosphatidylethanolamine from CDP-diacylglycerol: step 2/2. Functionally, catalyzes the formation of phosphatidylethanolamine (PtdEtn) from phosphatidylserine (PtdSer). The chain is Phosphatidylserine decarboxylase proenzyme from Ruegeria pomeroyi (strain ATCC 700808 / DSM 15171 / DSS-3) (Silicibacter pomeroyi).